A 270-amino-acid chain; its full sequence is Thiazole synthase (270 aa).

Lysine 111 (schiff-base intermediate with DXP) is an active-site residue. Residues glycine 172, 198-199, and 220-221 contribute to the 1-deoxy-D-xylulose 5-phosphate site; these read AG and NT.

This sequence belongs to the ThiG family. As to quaternary structure, homotetramer. Forms heterodimers with either ThiH or ThiS.

It is found in the cytoplasm. It carries out the reaction [ThiS sulfur-carrier protein]-C-terminal-Gly-aminoethanethioate + 2-iminoacetate + 1-deoxy-D-xylulose 5-phosphate = [ThiS sulfur-carrier protein]-C-terminal Gly-Gly + 2-[(2R,5Z)-2-carboxy-4-methylthiazol-5(2H)-ylidene]ethyl phosphate + 2 H2O + H(+). Its pathway is cofactor biosynthesis; thiamine diphosphate biosynthesis. Its function is as follows. Catalyzes the rearrangement of 1-deoxy-D-xylulose 5-phosphate (DXP) to produce the thiazole phosphate moiety of thiamine. Sulfur is provided by the thiocarboxylate moiety of the carrier protein ThiS. In vitro, sulfur can be provided by H(2)S. This chain is Thiazole synthase, found in Methylococcus capsulatus (strain ATCC 33009 / NCIMB 11132 / Bath).